Reading from the N-terminus, the 329-residue chain is Cuticle collagen 6 (329 aa).

Triple-helical region stretches follow at residues 142-171 (GAAGPPGPEGPPGNDGKDGRNGNDGKNGRD), 189-212 (GAPGPMGAMGPKGPPGPKGSPGEP), 216-248 (GKSGDDGMAGQPGPIGRPGRDGMKGAPGAAGRL), 253-279 (GPQGAPGKPGPIGPPGPKGNPGPDGQS), and 282-320 (GPPGPPGDSGTPGHEGRAGPNGPAGPPGDNGEKGDCGHC). Positions 146–329 (PPGPEGPPGN…CPPPRTPPGY (184 aa)) are disordered. The segment covering 156–173 (DGKDGRNGNDGKNGRDAE) has biased composition (basic and acidic residues). Residues 187-199 (PTGAPGPMGAMGP) show a composition bias toward low complexity. Pro residues predominate over residues 200–212 (KGPPGPKGSPGEP). Residues 251 to 272 (VPGPQGAPGKPGPIGPPGPKGN) are compositionally biased toward pro residues. Residues 273–282 (PGPDGQSYQG) are compositionally biased toward low complexity. A compositionally biased stretch (pro residues) spans 320–329 (CPPPRTPPGY).

This sequence belongs to the cuticular collagen family. Collagen polypeptide chains are complexed within the cuticle by disulfide bonds and other types of covalent cross-links.

Nematode cuticles are composed largely of collagen-like proteins. The cuticle functions both as an exoskeleton and as a barrier to protect the worm from its environment. In Caenorhabditis elegans, this protein is Cuticle collagen 6.